The sequence spans 498 residues: NAD(P)H-quinone oxidoreductase subunit 2, chloroplastic (498 aa).

14 helical membrane passes run 18–38 (LTIL…VIDL), 51–71 (ISMV…GFFT), 87–107 (FFLL…ILCS), 111–131 (LAEF…LSCA), 134–154 (LVTI…LSGY), 168–188 (FLLM…LLYG), 211–231 (IIYL…SLFP), 244–264 (PTPV…ALFT), 278–298 (WHVA…LIAV), 306–326 (MLAF…LSAD), 337–357 (YTFI…LFGL), 379–399 (FSLV…GFFG), 411–431 (GLYS…YYYL), and 470–490 (IAMI…DPII).

This sequence belongs to the complex I subunit 2 family. As to quaternary structure, NDH is composed of at least 16 different subunits, 5 of which are encoded in the nucleus.

The protein localises to the plastid. The protein resides in the chloroplast thylakoid membrane. It catalyses the reaction a plastoquinone + NADH + (n+1) H(+)(in) = a plastoquinol + NAD(+) + n H(+)(out). The enzyme catalyses a plastoquinone + NADPH + (n+1) H(+)(in) = a plastoquinol + NADP(+) + n H(+)(out). Functionally, NDH shuttles electrons from NAD(P)H:plastoquinone, via FMN and iron-sulfur (Fe-S) centers, to quinones in the photosynthetic chain and possibly in a chloroplast respiratory chain. The immediate electron acceptor for the enzyme in this species is believed to be plastoquinone. Couples the redox reaction to proton translocation, and thus conserves the redox energy in a proton gradient. This is NAD(P)H-quinone oxidoreductase subunit 2, chloroplastic from Adiantum capillus-veneris (Maidenhair fern).